A 330-amino-acid chain; its full sequence is Phosphatidylglycerol--prolipoprotein diacylglyceryl transferase (330 aa).

3 consecutive transmembrane segments (helical) span residues 22–42 (LPIR…LVVG), 57–77 (YDIA…YHLA), and 97–117 (IWDG…GAWL). Residue R145 coordinates a 1,2-diacyl-sn-glycero-3-phospho-(1'-sn-glycerol). Helical transmembrane passes span 193–213 (VVQP…FALI) and 257–277 (INSF…ILAP).

This sequence belongs to the Lgt family.

The protein resides in the cell membrane. It carries out the reaction L-cysteinyl-[prolipoprotein] + a 1,2-diacyl-sn-glycero-3-phospho-(1'-sn-glycerol) = an S-1,2-diacyl-sn-glyceryl-L-cysteinyl-[prolipoprotein] + sn-glycerol 1-phosphate + H(+). It participates in protein modification; lipoprotein biosynthesis (diacylglyceryl transfer). In terms of biological role, catalyzes the transfer of the diacylglyceryl group from phosphatidylglycerol to the sulfhydryl group of the N-terminal cysteine of a prolipoprotein, the first step in the formation of mature lipoproteins. The protein is Phosphatidylglycerol--prolipoprotein diacylglyceryl transferase of Mycobacterium leprae (strain Br4923).